Reading from the N-terminus, the 431-residue chain is MAYSTQRSEQLFTAAQQSIPGGVNSPVRAFNGVGGTPRFIAKADGAYLFDVDGNRYIDYVGSWGPMLLGHNHPAIKAAVLAAVENGLSYGAPTESEVLMAEMIRQIMPDMEMVRMVNSGTEATMSAIRLARGYTGRDKIVKFEGCYHGHADCLLVKAGSGALTLGQPNSPGVPADFAKHTLTCTYNDLASVEATFASYGSEIACIIVEPVAGNMNCIPPVPGFLEGLRAICDKYGALLIIDEVMTGFRVSLQGAQGYYGITPDLTTLGKIIGGGMPVGAFGGKKEIMAYIAPTGPVYQAGTLSGNPVAMAAGLAMLKAIQQPGLYDTLAEKTRQVAEGLKAAAAKQGIPLTVNYVGAMFGFFFTDEPEITRFEQVSRCDIDAFRRFYHLMLQEGVYLAPSAYEAGFLSLAHSEADIAETLAAAERCFAQMK.

An N6-(pyridoxal phosphate)lysine modification is found at lysine 269.

The protein belongs to the class-III pyridoxal-phosphate-dependent aminotransferase family. HemL subfamily. In terms of assembly, homodimer. The cofactor is pyridoxal 5'-phosphate.

The protein localises to the cytoplasm. The enzyme catalyses (S)-4-amino-5-oxopentanoate = 5-aminolevulinate. It participates in porphyrin-containing compound metabolism; protoporphyrin-IX biosynthesis; 5-aminolevulinate from L-glutamyl-tRNA(Glu): step 2/2. The sequence is that of Glutamate-1-semialdehyde 2,1-aminomutase from Tolumonas auensis (strain DSM 9187 / NBRC 110442 / TA 4).